The chain runs to 526 residues: Serine/threonine-protein kinase ppk22 (526 aa).

2 disordered regions span residues 1-24 (MARETEFNDKSPSSTDDGMSQSHF) and 39-106 (AATV…PRPL). Positions 10 to 23 (KSPSSTDDGMSQSH) are enriched in polar residues. Positions 65-78 (NQLNELDLNDSSDQ) are enriched in low complexity. Residue serine 154 is modified to Phosphoserine. The Protein kinase domain occupies 155 to 445 (FEKIRLLGQG…ASDIKQHPFF (291 aa)). Residues 161–169 (LGQGDVGKV) and lysine 184 each bind ATP. Aspartate 280 functions as the Proton acceptor in the catalytic mechanism. Threonine 339 is subject to Phosphothreonine. Serine 341 is modified (phosphoserine). Tyrosine 348 is modified (phosphotyrosine). The region spanning 446 to 526 (RHIQWALLRS…SVTLHHAGDE (81 aa)) is the AGC-kinase C-terminal domain. Residues 499–526 (MHSSTPVNEQSNPFDSFSSVTLHHAGDE) form a disordered region. Over residues 500 to 519 (HSSTPVNEQSNPFDSFSSVT) the composition is skewed to polar residues.

This sequence belongs to the protein kinase superfamily. AGC Ser/Thr protein kinase family.

The protein localises to the cytoplasm. It catalyses the reaction L-seryl-[protein] + ATP = O-phospho-L-seryl-[protein] + ADP + H(+). It carries out the reaction L-threonyl-[protein] + ATP = O-phospho-L-threonyl-[protein] + ADP + H(+). This is Serine/threonine-protein kinase ppk22 (ppk22) from Schizosaccharomyces pombe (strain 972 / ATCC 24843) (Fission yeast).